We begin with the raw amino-acid sequence, 325 residues long: D site-binding protein (325 aa).

3 disordered regions span residues 1 to 98 (MARP…AGPS), 124 to 203 (LEHG…EVLM), and 230 to 256 (FSEE…QKDE). Over residues 17 to 28 (GPAGAPPGGGAL) the composition is skewed to gly residues. Over residues 71-80 (AGPADAPSGA) the composition is skewed to low complexity. S86 is modified (phosphoserine). The span at 88-98 (RGRSGPVAGPS) shows a compositional bias: low complexity. Residues 129–153 (PPSPPPPGGLSPAPSPARTPAPSPG) show a composition bias toward pro residues. Over residues 154–171 (PGSCSSSSPRSSPGHAPA) the composition is skewed to low complexity. The bZIP domain occupies 255 to 318 (DEKYWSRRYK…SHYRAVLSRY (64 aa)). Positions 257 to 279 (KYWSRRYKNNEAAKRSRDARRLK) are basic motif. Residues 283–297 (ISVRAAFLEKENALL) form a leucine-zipper region.

Belongs to the bZIP family. PAR subfamily. Binds DNA as a homodimer or a heterodimer. Can form a heterodimer with TEF. In terms of tissue distribution, expressed in the suprachiasmatic nuclei (SCN) and in most peripheral tissues, with a strong circadian rhythmicity.

The protein resides in the nucleus. Functionally, this transcriptional activator recognizes and binds to the sequence 5'-RTTAYGTAAY-3' found in the promoter of genes such as albumin, CYP2A4 and CYP2A5. It is not essential for circadian rhythm generation, but modulates important clock output genes. May be a direct target for regulation by the circadian pacemaker component clock. May affect circadian period and sleep regulation. The sequence is that of D site-binding protein (Dbp) from Mus musculus (Mouse).